We begin with the raw amino-acid sequence, 952 residues long: RNA polymerase-associated protein RapA (952 aa).

The 171-residue stretch at 164–334 (EVGRRYAPRV…FARLRLLDPD (171 aa)) folds into the Helicase ATP-binding domain. Residue 177-184 (DEVGLGKT) coordinates ATP. The DEAH box motif lies at 280 to 283 (DEAH). A Helicase C-terminal domain is found at 492 to 668 (RVNWLLELLK…GKSDGLESLI (177 aa)).

The protein belongs to the SNF2/RAD54 helicase family. RapA subfamily. In terms of assembly, interacts with the RNAP. Has a higher affinity for the core RNAP than for the holoenzyme. Its ATPase activity is stimulated by binding to RNAP.

In terms of biological role, transcription regulator that activates transcription by stimulating RNA polymerase (RNAP) recycling in case of stress conditions such as supercoiled DNA or high salt concentrations. Probably acts by releasing the RNAP, when it is trapped or immobilized on tightly supercoiled DNA. Does not activate transcription on linear DNA. Probably not involved in DNA repair. The chain is RNA polymerase-associated protein RapA from Aliivibrio fischeri (strain ATCC 700601 / ES114) (Vibrio fischeri).